The chain runs to 128 residues: Elongation factor G (128 aa).

This sequence belongs to the GTP-binding elongation factor family. EF-G/EF-2 subfamily.

Its subcellular location is the cytoplasm. Its function is as follows. Catalyzes the GTP-dependent ribosomal translocation step during translation elongation. During this step, the ribosome changes from the pre-translocational (PRE) to the post-translocational (POST) state as the newly formed A-site-bound peptidyl-tRNA and P-site-bound deacylated tRNA move to the P and E sites, respectively. Catalyzes the coordinated movement of the two tRNA molecules, the mRNA and conformational changes in the ribosome. In Planobispora rosea, this protein is Elongation factor G (fusA).